A 622-amino-acid polypeptide reads, in one-letter code: DNA mismatch repair protein MutL (622 aa).

A compositionally biased stretch (basic and acidic residues) spans 399–414 (SSQNFHPDENDYRAEE). The interval 399–422 (SSQNFHPDENDYRAEEASPAEENP) is disordered.

The protein belongs to the DNA mismatch repair MutL/HexB family.

Its function is as follows. This protein is involved in the repair of mismatches in DNA. It is required for dam-dependent methyl-directed DNA mismatch repair. May act as a 'molecular matchmaker', a protein that promotes the formation of a stable complex between two or more DNA-binding proteins in an ATP-dependent manner without itself being part of a final effector complex. This is DNA mismatch repair protein MutL from Phocaeicola vulgatus (strain ATCC 8482 / DSM 1447 / JCM 5826 / CCUG 4940 / NBRC 14291 / NCTC 11154) (Bacteroides vulgatus).